We begin with the raw amino-acid sequence, 207 residues long: Guanylate kinase (207 aa).

Residues 4–184 form the Guanylate kinase-like domain; sequence GLLFIVSAPS…AVSDLYKIIR (181 aa). 11–18 contacts ATP; the sequence is APSGTGKS.

The protein belongs to the guanylate kinase family.

It localises to the cytoplasm. The enzyme catalyses GMP + ATP = GDP + ADP. Its function is as follows. Essential for recycling GMP and indirectly, cGMP. This chain is Guanylate kinase, found in Buchnera aphidicola subsp. Baizongia pistaciae (strain Bp).